A 602-amino-acid polypeptide reads, in one-letter code: MSRRSLSLWFPLLLLLLLPPTPSVLLADPGVPSPVNPCCYYPCQNQGVCVRFGLDNYQCDCTRTGYSGPNCTIPEIWTWLRNSLRPSPSFTHFLLTHGYWLWEFVNATFIREVLMRLVLTVRSNLIPSPPTYNSAHDYISWESFSNVSYYTRILPSVPKDCPTPMGTKGKKQLPDVQLLAQQLLLRREFIPAPQGTNILFAFFAQHFTHQFFKTSGKMGPGFTKALGHGVDLGHIYGDNLERQYHLRLFKDGKLKYQVLDGEVYPPSVEQASVLMRYPPGVPPERQMAVGQEVFGLLPGLMLFSTIWLREHNRVCDLLKEEHPTWDDEQLFQTTRLILIGETIKIVIEEYVQHLSGYFLQLKFDPELLFRAQFQYRNRIAMEFNHLYHWHPLMPNSFQVGSQEYSYEQFLFNTSMLVDYGVEALVDAFSRQRAGRIGGGRNFDYHVLHVAVDVIKESREMRLQPFNEYRKRFGLKPYTSFQELTGEKEMAAELEELYGDIDALEFYPGLLLEKCQPNSIFGESMIEMGAPFSLKGLLGNPICSPEYWKPSTFGGDVGFNLVNTASLKKLVCLNTKTCPYVSFRVPDYPGDDGSVLVRRSTEL.

A signal peptide spans 1–26 (MSRRSLSLWFPLLLLLLLPPTPSVLL). Positions 34–72 (PVNPCCYYPCQNQGVCVRFGLDNYQCDCTRTGYSGPNCT) constitute an EGF-like domain. 4 disulfide bridges follow: C38/C49, C39/C161, C43/C59, and C61/C71. 3 N-linked (GlcNAc...) asparagine glycosylation sites follow: N70, N106, and N146. H209 functions as the Proton acceptor in the catalytic mechanism. Y387 serves as the catalytic For cyclooxygenase activity. H390 serves as a coordination point for heme b. C571 and C577 are joined by a disulfide.

Belongs to the prostaglandin G/H synthase family. In terms of assembly, homodimer. Heme b serves as cofactor.

Its subcellular location is the microsome membrane. It is found in the endoplasmic reticulum membrane. The catalysed reaction is (5Z,8Z,11Z,14Z)-eicosatetraenoate + AH2 + 2 O2 = prostaglandin H2 + A + H2O. The enzyme catalyses (5Z,8Z,11Z,14Z)-eicosatetraenoate + 2 O2 = prostaglandin G2. It catalyses the reaction prostaglandin G2 + AH2 = prostaglandin H2 + A + H2O. It carries out the reaction (9Z,12Z)-octadecadienoate + AH2 + O2 = (9R)-hydroxy-(10E,12Z)-octadecadienoate + A + H2O. The catalysed reaction is (9Z,12Z)-octadecadienoate + AH2 + O2 = (9S)-hydroxy-(10E,12Z)-octadecadienoate + A + H2O. The enzyme catalyses (9Z,12Z)-octadecadienoate + AH2 + O2 = (13S)-hydroxy-(9Z,11E)-octadecadienoate + A + H2O. It catalyses the reaction (9Z,12Z)-octadecadienoate + AH2 + O2 = (13R)-hydroxy-(9Z,11E)-octadecadienoate + A + H2O. It functions in the pathway lipid metabolism; prostaglandin biosynthesis. With respect to regulation, the cyclooxygenase activity is inhibited by nonsteroidal anti-inflammatory drugs (NSAIDs) including ibuprofen, flurbiprofen, ketoprofen, naproxen, flurbiprofen, anirolac, fenclofenac and diclofenac. Functionally, dual cyclooxygenase and peroxidase that plays an important role in the biosynthesis pathway of prostanoids, a class of C20 oxylipins mainly derived from arachidonate ((5Z,8Z,11Z,14Z)-eicosatetraenoate, AA, C20:4(n-6)), with a particular role in the inflammatory response. The cyclooxygenase activity oxygenates AA to the hydroperoxy endoperoxide prostaglandin G2 (PGG2), and the peroxidase activity reduces PGG2 to the hydroxy endoperoxide prostaglandin H2 (PGH2), the precursor of all 2-series prostaglandins and thromboxanes. This complex transformation is initiated by abstraction of hydrogen at carbon 13 (with S-stereochemistry), followed by insertion of molecular O2 to form the endoperoxide bridge between carbon 9 and 11 that defines prostaglandins. The insertion of a second molecule of O2 (bis-oxygenase activity) yields a hydroperoxy group in PGG2 that is then reduced to PGH2 by two electrons. Involved in the constitutive production of prostanoids in particular in the stomach and platelets. In gastric epithelial cells, it is a key step in the generation of prostaglandins, such as prostaglandin E2 (PGE2), which plays an important role in cytoprotection. In platelets, it is involved in the generation of thromboxane A2 (TXA2), which promotes platelet activation and aggregation, vasoconstriction and proliferation of vascular smooth muscle cells. Can also use linoleate (LA, (9Z,12Z)-octadecadienoate, C18:2(n-6)) as substrate and produce hydroxyoctadecadienoates (HODEs) in a regio- and stereospecific manner, being (9R)-HODE ((9R)-hydroxy-(10E,12Z)-octadecadienoate) and (13S)-HODE ((13S)-hydroxy-(9Z,11E)-octadecadienoate) its major products. The sequence is that of Prostaglandin G/H synthase 1 from Mus musculus (Mouse).